We begin with the raw amino-acid sequence, 589 residues long: MSILLEKIKTLPPNPGCYLFKNTKDTIIYVGKAKNLKKRVQSYFTKRNNLKTAMLIEETQDFFYIITNNEQEALILEANLIKTHTPKYNFKLLDDKTYPYIEITKEKHPQLKISRFKQIPPGKIIFGPYPNLKSTKETLKLLHLLYPLRRCQLASKKPCLHFHINQCLGACAGKTINYKPNIDAITKFLKGNIKDILKKLHHLMQKASEKMFYEKAQEYRDIIDSIKQTTKKQLISNQKLKNCDIFAYAFNQDQIAIQILKIRQGNIVDSYRSVFSYVGFVCENILTYLNCYYQKNIKPDIIITGKNQDENILQQTITNQTLLEQILQTKVNIYHKGDKKKLFLLALKNAQNDLSHNNLIYQSKDQKIQEALNKLAIIFNKDIKRIDVFDNSQLFGKAFVAARIVFNHFEFDKKLYRTFHIKGELPNEYQAFEETLTRCYNKGKEAENDATDLILVDGSLVQLRQSQKTLKKLGYEIPLGALQKNNKHQLTHLVTFQEKLMLEQDPNLFHFLKSLSEEVHRFAVSFHRKTKKKLDYKTTLSNIKGVGVVRKKAILNHFESLEAIKKATLQDFQKIGINQKLFLLIKKSL.

The GIY-YIG domain maps to 13 to 90; it reads PNPGCYLFKN…IKTHTPKYNF (78 aa). Positions 194–229 constitute a UVR domain; sequence KDILKKLHHLMQKASEKMFYEKAQEYRDIIDSIKQT.

It belongs to the UvrC family. In terms of assembly, interacts with UvrB in an incision complex.

It localises to the cytoplasm. Its function is as follows. The UvrABC repair system catalyzes the recognition and processing of DNA lesions. UvrC both incises the 5' and 3' sides of the lesion. The N-terminal half is responsible for the 3' incision and the C-terminal half is responsible for the 5' incision. In Aster yellows witches'-broom phytoplasma (strain AYWB), this protein is UvrABC system protein C.